The following is a 120-amino-acid chain: MKAQEIIKSIEAEYLKSDLPTIHVGDTVRVGVRISEGGKERIQPYEGTVIAMRNGGISETITVRKIFQGVGVERVFLLHSPIIAAITVIRRGKVRRAKLYYLRDRVGKATRIRQRFDRPL.

Belongs to the bacterial ribosomal protein bL19 family.

This protein is located at the 30S-50S ribosomal subunit interface and may play a role in the structure and function of the aminoacyl-tRNA binding site. The sequence is that of Large ribosomal subunit protein bL19 from Rippkaea orientalis (strain PCC 8801 / RF-1) (Cyanothece sp. (strain PCC 8801)).